We begin with the raw amino-acid sequence, 519 residues long: Zinc finger protein 692 (519 aa).

The tract at residues G123 to I314 is disordered. Positions R145–Q155 are enriched in polar residues. Position 162 is a phosphoserine (S162). Basic and acidic residues predominate over residues H164–L173. Residues V177–P187 show a composition bias toward pro residues. Acidic residues predominate over residues G188 to L206. Position 231 is a phosphoserine (S231). A compositionally biased stretch (low complexity) spans A247–R266. The segment covering P277–P303 has biased composition (polar residues). 5 C2H2-type zinc fingers span residues M328–H353, F359–H383, Y389–H411, L417–H439, and F448–H471. The interval K469–Q519 is disordered. Residue S470 is modified to Phosphoserine; by AMPK. The span at S501–Q519 shows a compositional bias: polar residues.

It belongs to the krueppel C2H2-type zinc-finger protein family. Post-translationally, phosphorylation at Ser-470 results in loss of DNA-binding activity. Ubiquitous. Highly expressed in brain, thymus and spleen.

The protein resides in the nucleus. Functionally, may act as an transcriptional repressor for PCK1 gene expression, in turn may participate in the hepatic gluconeogenesis regulation through the activated AMPK signaling pathway. The polypeptide is Zinc finger protein 692 (ZNF692) (Homo sapiens (Human)).